The following is a 312-amino-acid chain: Ribosomal protein L11 methyltransferase (312 aa).

Thr-162, Gly-183, Asp-205, and Asn-248 together coordinate S-adenosyl-L-methionine.

The protein belongs to the methyltransferase superfamily. PrmA family.

The protein localises to the cytoplasm. The enzyme catalyses L-lysyl-[protein] + 3 S-adenosyl-L-methionine = N(6),N(6),N(6)-trimethyl-L-lysyl-[protein] + 3 S-adenosyl-L-homocysteine + 3 H(+). Methylates ribosomal protein L11. The sequence is that of Ribosomal protein L11 methyltransferase from Bacillus cereus (strain B4264).